Reading from the N-terminus, the 257-residue chain is NAD-capped RNA hydrolase NudC (257 aa).

Position 69 (Arg69) interacts with substrate. Zn(2+) contacts are provided by Cys98 and Cys101. Residue Glu111 participates in substrate binding. 2 residues coordinate Zn(2+): Cys116 and Cys119. Tyr124 lines the substrate pocket. One can recognise a Nudix hydrolase domain in the interval 125 to 248 (PQIAPCIIVA…TVARRLIEDT (124 aa)). A divalent metal cation contacts are provided by Ala158, Glu174, and Glu178. Positions 159-180 (GFVEVGETLEQAVAREVMEESG) match the Nudix box motif. 192 to 199 (QPWPFPQS) is a substrate binding site. Glu219 serves as a coordination point for a divalent metal cation. Substrate is bound at residue Ala241.

Belongs to the Nudix hydrolase family. NudC subfamily. In terms of assembly, homodimer. Mg(2+) serves as cofactor. The cofactor is Mn(2+). Zn(2+) is required as a cofactor.

It catalyses the reaction a 5'-end NAD(+)-phospho-ribonucleoside in mRNA + H2O = a 5'-end phospho-adenosine-phospho-ribonucleoside in mRNA + beta-nicotinamide D-ribonucleotide + 2 H(+). The catalysed reaction is NAD(+) + H2O = beta-nicotinamide D-ribonucleotide + AMP + 2 H(+). It carries out the reaction NADH + H2O = reduced beta-nicotinamide D-ribonucleotide + AMP + 2 H(+). Functionally, mRNA decapping enzyme that specifically removes the nicotinamide adenine dinucleotide (NAD) cap from a subset of mRNAs by hydrolyzing the diphosphate linkage to produce nicotinamide mononucleotide (NMN) and 5' monophosphate mRNA. The NAD-cap is present at the 5'-end of some mRNAs and stabilizes RNA against 5'-processing. Has preference for mRNAs with a 5'-end purine. Catalyzes the hydrolysis of a broad range of dinucleotide pyrophosphates. The polypeptide is NAD-capped RNA hydrolase NudC (Salmonella typhimurium (strain LT2 / SGSC1412 / ATCC 700720)).